The primary structure comprises 174 residues: MCCVYRMNRPASGLTVVFCGKLSGKPGPKSAAWRMPWQKSGADDGGENPRFFSAGPRTEHKGSRRRLRFTRPCAWPCGFSVMWPPCRVRAVPCLHLSRAGGDARVRFAAAVTRSLLPVCRDFPVVHPLRFRGLTLQLPSAVCVRLRLPLRPVHPRLIARLLWRHGTARCRGICE.

Residues 1–31 form the signal peptide; the sequence is MCCVYRMNRPASGLTVVFCGKLSGKPGPKSA. Positions 39–59 are disordered; sequence KSGADDGGENPRFFSAGPRTE.

This is an uncharacterized protein from Escherichia coli (strain K12).